We begin with the raw amino-acid sequence, 870 residues long: DNA-directed RNA polymerase subunit Rpo1N (870 aa).

Zn(2+)-binding residues include C60, C63, C70, H73, C100, C103, C146, and C149. 3 residues coordinate Mg(2+): D451, D453, and D455.

It belongs to the RNA polymerase beta' chain family. Part of the RNA polymerase complex. Mg(2+) serves as cofactor. It depends on Zn(2+) as a cofactor.

The protein localises to the cytoplasm. The enzyme catalyses RNA(n) + a ribonucleoside 5'-triphosphate = RNA(n+1) + diphosphate. Functionally, DNA-dependent RNA polymerase (RNAP) catalyzes the transcription of DNA into RNA using the four ribonucleoside triphosphates as substrates. Forms the clamp head domain. In Methanothermobacter thermautotrophicus (strain ATCC 29096 / DSM 1053 / JCM 10044 / NBRC 100330 / Delta H) (Methanobacterium thermoautotrophicum), this protein is DNA-directed RNA polymerase subunit Rpo1N.